The following is a 371-amino-acid chain: Probable cysteine protease RDL5 (371 aa).

The first 23 residues, 1 to 23, serve as a signal peptide directing secretion; it reads MGYAKSAMLIFLLALVIASCATA. A propeptide spans 24 to 143 (activation peptide); that stretch reads MDMSVVSSND…NRYKTSDGDV (120 aa). Asn-94 carries N-linked (GlcNAc...) asparagine glycosylation. 3 disulfide bridges follow: Cys-165–Cys-206, Cys-199–Cys-239, and Cys-298–Cys-349. Cys-168 is a catalytic residue. Active-site residues include His-304 and Asn-324.

The protein belongs to the peptidase C1 family. As to expression, expressed in roots, inflorescences and siliques.

Functionally, possesses protease activity in vitro. The sequence is that of Probable cysteine protease RDL5 from Arabidopsis thaliana (Mouse-ear cress).